We begin with the raw amino-acid sequence, 279 residues long: Probable endonuclease 4 (279 aa).

Positions 69, 109, 145, 179, 182, 216, 229, 231, and 261 each coordinate Zn(2+).

The protein belongs to the AP endonuclease 2 family. Requires Zn(2+) as cofactor.

It carries out the reaction Endonucleolytic cleavage to 5'-phosphooligonucleotide end-products.. In terms of biological role, endonuclease IV plays a role in DNA repair. It cleaves phosphodiester bonds at apurinic or apyrimidinic (AP) sites, generating a 3'-hydroxyl group and a 5'-terminal sugar phosphate. The chain is Probable endonuclease 4 from Buchnera aphidicola subsp. Schizaphis graminum (strain Sg).